Here is a 160-residue protein sequence, read N- to C-terminus: Cyclic pyranopterin monophosphate synthase (160 aa).

Substrate is bound by residues 75 to 77 (LCH) and 113 to 114 (ME). Asp-128 is a catalytic residue.

It belongs to the MoaC family. Homohexamer; trimer of dimers.

The catalysed reaction is (8S)-3',8-cyclo-7,8-dihydroguanosine 5'-triphosphate = cyclic pyranopterin phosphate + diphosphate. It functions in the pathway cofactor biosynthesis; molybdopterin biosynthesis. Functionally, catalyzes the conversion of (8S)-3',8-cyclo-7,8-dihydroguanosine 5'-triphosphate to cyclic pyranopterin monophosphate (cPMP). The chain is Cyclic pyranopterin monophosphate synthase from Ruthia magnifica subsp. Calyptogena magnifica.